Consider the following 309-residue polypeptide: tRNA-cytidine(32) 2-sulfurtransferase (309 aa).

Residues 47 to 52 (SGGKDS) carry the PP-loop motif motif. [4Fe-4S] cluster-binding residues include C122, C125, and C213.

The protein belongs to the TtcA family. In terms of assembly, homodimer. It depends on Mg(2+) as a cofactor. [4Fe-4S] cluster serves as cofactor.

It is found in the cytoplasm. The catalysed reaction is cytidine(32) in tRNA + S-sulfanyl-L-cysteinyl-[cysteine desulfurase] + AH2 + ATP = 2-thiocytidine(32) in tRNA + L-cysteinyl-[cysteine desulfurase] + A + AMP + diphosphate + H(+). The protein operates within tRNA modification. Functionally, catalyzes the ATP-dependent 2-thiolation of cytidine in position 32 of tRNA, to form 2-thiocytidine (s(2)C32). The sulfur atoms are provided by the cysteine/cysteine desulfurase (IscS) system. This is tRNA-cytidine(32) 2-sulfurtransferase from Erwinia tasmaniensis (strain DSM 17950 / CFBP 7177 / CIP 109463 / NCPPB 4357 / Et1/99).